Here is a 590-residue protein sequence, read N- to C-terminus: Aspartate--tRNA(Asp/Asn) ligase (590 aa).

Glu-169 provides a ligand contact to L-aspartate. Positions 193 to 196 (QLFK) are aspartate. Arg-215 is an L-aspartate binding site. ATP contacts are provided by residues 215–217 (RDE) and Gln-224. Residue His-447 coordinates L-aspartate. An ATP-binding site is contributed by Glu-479. An L-aspartate-binding site is contributed by Arg-486. An ATP-binding site is contributed by 531–534 (GWDR). Residues 556-590 (GGFDPLTAAPAPITPEQRKEAGVDARPQQDLPPQS) form a disordered region.

The protein belongs to the class-II aminoacyl-tRNA synthetase family. Type 1 subfamily. Homodimer.

The protein resides in the cytoplasm. The catalysed reaction is tRNA(Asx) + L-aspartate + ATP = L-aspartyl-tRNA(Asx) + AMP + diphosphate. Functionally, aspartyl-tRNA synthetase with relaxed tRNA specificity since it is able to aspartylate not only its cognate tRNA(Asp) but also tRNA(Asn). Reaction proceeds in two steps: L-aspartate is first activated by ATP to form Asp-AMP and then transferred to the acceptor end of tRNA(Asp/Asn). This chain is Aspartate--tRNA(Asp/Asn) ligase, found in Nocardioides sp. (strain ATCC BAA-499 / JS614).